A 158-amino-acid chain; its full sequence is NAD(P)H-quinone oxidoreductase subunit N (158 aa).

Belongs to the complex I NdhN subunit family. As to quaternary structure, NDH-1 can be composed of about 15 different subunits; different subcomplexes with different compositions have been identified which probably have different functions.

It is found in the cellular thylakoid membrane. It catalyses the reaction a plastoquinone + NADH + (n+1) H(+)(in) = a plastoquinol + NAD(+) + n H(+)(out). The catalysed reaction is a plastoquinone + NADPH + (n+1) H(+)(in) = a plastoquinol + NADP(+) + n H(+)(out). NDH-1 shuttles electrons from an unknown electron donor, via FMN and iron-sulfur (Fe-S) centers, to quinones in the respiratory and/or the photosynthetic chain. The immediate electron acceptor for the enzyme in this species is believed to be plastoquinone. Couples the redox reaction to proton translocation, and thus conserves the redox energy in a proton gradient. Cyanobacterial NDH-1 also plays a role in inorganic carbon-concentration. The chain is NAD(P)H-quinone oxidoreductase subunit N from Prochlorococcus marinus (strain MIT 9301).